A 167-amino-acid polypeptide reads, in one-letter code: NAD(P)H-quinone oxidoreductase subunit I, chloroplastic (167 aa).

4Fe-4S ferredoxin-type domains lie at 55-84 and 95-124; these read GRIH…VDWK and LNYS…MTEE. [4Fe-4S] cluster-binding residues include cysteine 64, cysteine 67, cysteine 70, cysteine 74, cysteine 104, cysteine 107, cysteine 110, and cysteine 114.

Belongs to the complex I 23 kDa subunit family. As to quaternary structure, NDH is composed of at least 16 different subunits, 5 of which are encoded in the nucleus. It depends on [4Fe-4S] cluster as a cofactor.

The protein resides in the plastid. It localises to the chloroplast thylakoid membrane. It carries out the reaction a plastoquinone + NADH + (n+1) H(+)(in) = a plastoquinol + NAD(+) + n H(+)(out). It catalyses the reaction a plastoquinone + NADPH + (n+1) H(+)(in) = a plastoquinol + NADP(+) + n H(+)(out). In terms of biological role, NDH shuttles electrons from NAD(P)H:plastoquinone, via FMN and iron-sulfur (Fe-S) centers, to quinones in the photosynthetic chain and possibly in a chloroplast respiratory chain. The immediate electron acceptor for the enzyme in this species is believed to be plastoquinone. Couples the redox reaction to proton translocation, and thus conserves the redox energy in a proton gradient. This Gossypium barbadense (Sea Island cotton) protein is NAD(P)H-quinone oxidoreductase subunit I, chloroplastic.